The sequence spans 170 residues: Large ribosomal subunit protein uL16 (170 aa).

It belongs to the universal ribosomal protein uL16 family.

This Methanoculleus marisnigri (strain ATCC 35101 / DSM 1498 / JR1) protein is Large ribosomal subunit protein uL16.